The chain runs to 349 residues: MRIEEDIKLGFKDVLIRPKRSILKSRSQVNLARCFSFKYSASIWSGIPIIAANMDTIGTFEMVKSLSKFNILTAVHKYYSFEEWKNFVCLSSKEILNHVIVSIGTSNIDFLKIKKIFLLSSELKYICIDVANGYSEHIVSFLKLVRDYFPDKIICAGNVVTGEMVEELILSGADIVKVGIGPGSVCTTRVKTGVGYPQLSAIIECADAAHGLNGQIISDGGCTVSGDIAKAFGGGADFVMLGGMLSGHKECSGDIIEEKSKKYMIFYGMSSVSAMQRYEGKIAGYRASEGKTVKIPFRGSVDSTIRDILGGLRSSCTYVGAEKLKELTKRTTFIRVTEQENCIFNAFKE.

Residue 108–131 coordinates NADP(+); sequence IDFLKIKKIFLLSSELKYICIDVA. 2 residues coordinate K(+): Gly-181 and Gly-183. The Thioimidate intermediate role is filled by Cys-186. 216 to 239 contributes to the NADP(+) binding site; the sequence is IISDGGCTVSGDIAKAFGGGADFV.

It belongs to the IMPDH/GMPR family. GuaC type 1 subfamily. In terms of assembly, homotetramer.

It catalyses the reaction IMP + NH4(+) + NADP(+) = GMP + NADPH + 2 H(+). Functionally, catalyzes the irreversible NADPH-dependent deamination of GMP to IMP. It functions in the conversion of nucleobase, nucleoside and nucleotide derivatives of G to A nucleotides, and in maintaining the intracellular balance of A and G nucleotides. The polypeptide is GMP reductase (Buchnera aphidicola subsp. Acyrthosiphon pisum (strain Tuc7)).